The following is a 431-amino-acid chain: 3-phosphoshikimate 1-carboxyvinyltransferase (431 aa).

Positions 22, 23, and 27 each coordinate 3-phosphoshikimate. Lys-22 contacts phosphoenolpyruvate. Residues Gly-94 and Arg-122 each coordinate phosphoenolpyruvate. Residues Ser-167, Gln-169, Asp-315, and Lys-342 each coordinate 3-phosphoshikimate. Gln-169 lines the phosphoenolpyruvate pocket. Asp-315 acts as the Proton acceptor in catalysis. 2 residues coordinate phosphoenolpyruvate: Arg-346 and Arg-388.

Belongs to the EPSP synthase family. Monomer.

It localises to the cytoplasm. The enzyme catalyses 3-phosphoshikimate + phosphoenolpyruvate = 5-O-(1-carboxyvinyl)-3-phosphoshikimate + phosphate. The protein operates within metabolic intermediate biosynthesis; chorismate biosynthesis; chorismate from D-erythrose 4-phosphate and phosphoenolpyruvate: step 6/7. In terms of biological role, catalyzes the transfer of the enolpyruvyl moiety of phosphoenolpyruvate (PEP) to the 5-hydroxyl of shikimate-3-phosphate (S3P) to produce enolpyruvyl shikimate-3-phosphate and inorganic phosphate. This is 3-phosphoshikimate 1-carboxyvinyltransferase from Pelobacter propionicus (strain DSM 2379 / NBRC 103807 / OttBd1).